Here is a 746-residue protein sequence, read N- to C-terminus: Catalase-peroxidase (746 aa).

The segment covering 1–20 has biased composition (polar residues); it reads MSSDTSSSRPPQPDSGTASK. The interval 1-42 is disordered; the sequence is MSSDTSSSRPPQPDSGTASKSESENPAIPSPKPKAHAPLTNR. The tryptophyl-tyrosyl-methioninium (Trp-Tyr) (with M-262) cross-link spans 113 to 236; the sequence is WHAAGTYRIH…YGATTMGLIY (124 aa). Residue histidine 114 is the Proton acceptor of the active site. Positions 236–262 form a cross-link, tryptophyl-tyrosyl-methioninium (Tyr-Met) (with W-113); sequence YVNPEGPEGKPDPIAAAIDIRETFGRM. Heme b is bound at residue histidine 277.

Belongs to the peroxidase family. Peroxidase/catalase subfamily. As to quaternary structure, homodimer or homotetramer. It depends on heme b as a cofactor. In terms of processing, formation of the three residue Trp-Tyr-Met cross-link is important for the catalase, but not the peroxidase activity of the enzyme.

It carries out the reaction H2O2 + AH2 = A + 2 H2O. It catalyses the reaction 2 H2O2 = O2 + 2 H2O. Its function is as follows. Bifunctional enzyme with both catalase and broad-spectrum peroxidase activity. May play a role in the intracellular survival of mycobacteria. The sequence is that of Catalase-peroxidase from Mycobacterium intracellulare.